Reading from the N-terminus, the 513-residue chain is Protein phosphatase 1H (513 aa).

At Ser-7 the chain carries Phosphoserine. The PPM-type phosphatase domain occupies 77–506 (ATGYAEVINA…DDISVYVIPL (430 aa)). The interval 109 to 133 (TITSTPNRNSKRRSSLPNGEGLQLK) is disordered. Thr-113 carries the post-translational modification Phosphothreonine. Phosphoserine occurs at positions 123 and 210. Position 212 is an omega-N-methylarginine (Arg-212). Ser-220 carries the phosphoserine modification. The residue at position 223 (Thr-223) is a Phosphothreonine. A Phosphoserine modification is found at Ser-421.

The protein belongs to the PP2C family.

The protein resides in the nucleus. The protein localises to the cytoplasm. It carries out the reaction O-phospho-L-seryl-[protein] + H2O = L-seryl-[protein] + phosphate. The enzyme catalyses O-phospho-L-threonyl-[protein] + H2O = L-threonyl-[protein] + phosphate. Functionally, dephosphorylates CDKN1B at 'Thr-187', thus removing a signal for proteasomal degradation. The protein is Protein phosphatase 1H (Ppm1h) of Mus musculus (Mouse).